Consider the following 603-residue polypeptide: MSSNAQVRRRAVQAARGESPFDLLLIDAQIVDMATGEIRPADVGIVGEMIASVHPRGSREDAHEVRSLAGGYLSPGLMDTHVHLESSHLPPERYAEIVLTQGTTAVFWDPHELANVLGVAGVRYAVDASRHLPLQVMVAAPSSVPSTPGLEMSGADFAGAEMETMLGWPEVRGVAEVMDMHGVLHGSERMQEIVQAGLNSGKLIEGHARGLSGADLQAYLAAGVTSDHELTSADDALEKLRAGLTIEIRGSHPYLLPDIVAALKTLPHLSSQITVCTDDVPPDILLEKGGIIALLNLLIEHGLPAVDALRFATLNAAIRLQRHDLGLIAAGRRADLVVFDSLEKLVAREVYIGGKLLARAGNLLTPIAPAAGVTPPRDTLQIAPLRADDFILRVQGIRHGIARLRHIRGARFTQWGEVEVQVRDGIVQLPAGFSLIWVKHRHGRHQATPQIALLEGWGELRGAIATSYSHDSHNLVVLGRDANDMALAANQLIASGGGMALAQQGEILAHVAMPIAGMLSDLPAAELARQFRELRDLSSQVADWEPPYRVFKAIEGTCLACNAGPHLTDLGLTDGGSRQIVDPLIACREIPEPTDHNNNPQGA.

Belongs to the metallo-dependent hydrolases superfamily. Adenine deaminase family. Homodimer. It depends on Mn(2+) as a cofactor.

It catalyses the reaction adenine + H2O + H(+) = hypoxanthine + NH4(+). The protein is Adenine deaminase of Klebsiella pneumoniae subsp. pneumoniae (strain ATCC 700721 / MGH 78578).